The sequence spans 240 residues: 1-acyl-sn-glycerol-3-phosphate acyltransferase (240 aa).

An HXXXXD motif motif is present at residues H73 to D78.

It belongs to the 1-acyl-sn-glycerol-3-phosphate acyltransferase family.

Its subcellular location is the cell inner membrane. It carries out the reaction a 1-acyl-sn-glycero-3-phosphate + an acyl-CoA = a 1,2-diacyl-sn-glycero-3-phosphate + CoA. It participates in phospholipid metabolism; CDP-diacylglycerol biosynthesis; CDP-diacylglycerol from sn-glycerol 3-phosphate: step 2/3. Functionally, converts lysophosphatidic acid (LPA) into phosphatidic acid by incorporating acyl moiety at the 2 position. This is 1-acyl-sn-glycerol-3-phosphate acyltransferase (plsC) from Haemophilus influenzae (strain ATCC 51907 / DSM 11121 / KW20 / Rd).